Consider the following 324-residue polypeptide: Antihemorrhagic factor cMSF (324 aa).

The N-terminal stretch at 1-19 (MHFLVALVLLGQIIGSTLS) is a signal peptide. Cystatin fetuin-A-type domains are found at residues 22 to 130 (VRGD…VKCH) and 141 to 254 (RNCL…SDCV). The Cell attachment site signature appears at 23–25 (RGD). Disulfide bonds link C28–C315, C85–C96, C110–C129, C143–C146, C205–C217, C230–C253, and C287–C291. Residue N204 is glycosylated (N-linked (GlcNAc...) asparagine). N282 carries N-linked (GlcNAc...) asparagine glycosylation.

Homodimer. Expressed by the liver.

The protein localises to the secreted. Its function is as follows. Suppress hemorrhage induced by metalloproteinases from the same venom (brevilysin-H3, -H4, -H6) and from habu venom (metalloproteinases HR1A and HR1B). The non-hemorrhagic brevilysin-L4 is not inhibited by cMSF. Does not inhibit serine and cysteine proteases such as trypsin, chymotrypsin, thermolysin, and papain. The inhibition may occur by formation of a non-covalent complex between this protein and the proteinases at their metalloproteinase domains. The sequence is that of Antihemorrhagic factor cMSF from Gloydius brevicauda (Korean slamosa snake).